The primary structure comprises 122 residues: Holo-[acyl-carrier-protein] synthase (122 aa).

Residues Asp8 and Glu56 each coordinate Mg(2+).

Belongs to the P-Pant transferase superfamily. AcpS family. Mg(2+) is required as a cofactor.

It localises to the cytoplasm. It carries out the reaction apo-[ACP] + CoA = holo-[ACP] + adenosine 3',5'-bisphosphate + H(+). Its function is as follows. Transfers the 4'-phosphopantetheine moiety from coenzyme A to a Ser of acyl-carrier-protein. The chain is Holo-[acyl-carrier-protein] synthase from Salinispora arenicola (strain CNS-205).